A 378-amino-acid chain; its full sequence is Chitinase (378 aa).

Positions 1–28 are cleaved as a signal peptide; that stretch reads MNFTVKYSFLVICLLCCLLSTYVSVIEG. Positions 53–378 constitute a GH18 domain; sequence GIIQGYYPSW…AIEYFVESLH (326 aa). Glu174 (proton donor) is an active-site residue. Cys220 and Cys230 form a disulfide bridge.

This sequence belongs to the glycosyl hydrolase 18 family. Forms a hetero-multimeric, high molecular weight complex composed of at least CHT1, SOAP AND WARP. Within the complex, may interact with WARP via a disulfide bond.

Its subcellular location is the secreted. It is found in the cytoplasmic vesicle. It localises to the secretory vesicle. The protein resides in the microneme. It carries out the reaction Random endo-hydrolysis of N-acetyl-beta-D-glucosaminide (1-&gt;4)-beta-linkages in chitin and chitodextrins.. Inhibited by allosamidin. In terms of biological role, endochitinase that cleaves beta-1,4-linkages between tri- and tetramers of N-acetylglucosamine (GlcNAc) from penta- and hexameric chitin oligomers. Does not cleave smaller chitin oligosaccharides. Required to cross the acellular, chitin-containing peritrophic matrix (PM) which is formed around the ingested blood meal in the mosquito midgut allowing the ookinete to invade the mosquito gut epithelium. This Plasmodium falciparum (isolate 3D7) protein is Chitinase.